The sequence spans 788 residues: MNQRILSTLGFDKVKQQLLQFIVTAQGTNEVSELLPIADENKIQSWLNETQDGLKVQRLRGGIPIPKLENIQPHMKRIEIGADLNGIELAQVGRVLSTTSELTRFFDELSENEVDFERLYMWREQLEVLPELNRQLKQAIDDDGYVTDEASPALKAIRQNIRRSEQTIREELDSIIRGKNARYLSDALVTMRNERYVIPVKQEYKNIFGGVVHDQSASGQTLFIEPKQILEMNNRLRQQQIAERNEITRILAELSAELVPYRREITHNAYVIGKLDFINAKARLGKELKAVVPEISQANHVVFKQARHPLLNPEKAVANDIVIGEEYQAIVITGPNTGGKTITLKTLGLLQLMGQAGLPIPVEEESKMGIFTEVFADIGDEQSIEQSLSTFSSHMTNIVSVLKKVDHQSLVLFDELGAGTDPQEGAALAIAILDSLGAKGAYVMATTHYPELKVYGYNRAGTINASMEFDVDTLSPTYRLLIGVPGRSNAFEISKRLGLDNSIIEAAKQIMDGESQDLNEMIEDLENRRKMAETEYLEARHYVDESAALHKELKEAYQVFFEEREKELQKARKEANKIIAEAEENAETIISDIRKMQLESGQQGGVKEHQLIDAKTQLSQLHHEETKLAKNKVLKKAKEQKKLKAGDEVIVNTYGQRGTLLKDNGKGQWQVQLGILKMNVSEEDMTPVAPQKEAKPRVTTVRSAESSHVGTQLDLRGKRYEEALAEVDQYIDAAILAGYPQVTIVHGKGTGALRTGITEFLKNHRSVKSYEFAPQNQGGNGATVVKFQ.

334 to 341 (GPNTGGKT) contacts ATP. Positions 713–788 (LDLRGKRYEE…GNGATVVKFQ (76 aa)) constitute a Smr domain.

It belongs to the DNA mismatch repair MutS family. MutS2 subfamily. As to quaternary structure, homodimer. Binds to stalled ribosomes, contacting rRNA.

Functionally, endonuclease that is involved in the suppression of homologous recombination and thus may have a key role in the control of bacterial genetic diversity. Its function is as follows. Acts as a ribosome collision sensor, splitting the ribosome into its 2 subunits. Detects stalled/collided 70S ribosomes which it binds and splits by an ATP-hydrolysis driven conformational change. Acts upstream of the ribosome quality control system (RQC), a ribosome-associated complex that mediates the extraction of incompletely synthesized nascent chains from stalled ribosomes and their subsequent degradation. Probably generates substrates for RQC. The sequence is that of Endonuclease MutS2 from Enterococcus faecalis (strain ATCC 700802 / V583).